A 180-amino-acid polypeptide reads, in one-letter code: Putative manganese efflux pump MntP (180 aa).

The next 5 helical transmembrane spans lie at 6 to 26 (VLLLAGALGTDAFSLCLGLGL), 33 to 53 (MAWMLVGLIVALHVVLPVAGW), 63 to 83 (VGRWAAYLGAAILFYLGVKMV), 101 to 121 (GFLGLTVLAGSVSMDALSVGF), and 130 to 150 (LLLTAGVIGLVAGLMSAAAFV).

This sequence belongs to the MntP (TC 9.B.29) family.

It localises to the cell membrane. Functionally, probably functions as a manganese efflux pump. This chain is Putative manganese efflux pump MntP, found in Desulforudis audaxviator (strain MP104C).